We begin with the raw amino-acid sequence, 45 residues long: Photosystem II reaction center protein K (45 aa).

Positions 1 to 8 (METIYLLA) are excised as a propeptide. The helical transmembrane segment at 16–40 (IFDPLVDVLPVIPLFFLALAFVWQA) threads the bilayer.

The protein belongs to the PsbK family. PSII is composed of 1 copy each of membrane proteins PsbA, PsbB, PsbC, PsbD, PsbE, PsbF, PsbH, PsbI, PsbJ, PsbK, PsbL, PsbM, PsbT, PsbX, PsbY, PsbZ, Psb30/Ycf12, peripheral proteins PsbO, CyanoQ (PsbQ), PsbU, PsbV and a large number of cofactors. It forms dimeric complexes.

The protein resides in the cellular thylakoid membrane. Its function is as follows. One of the components of the core complex of photosystem II (PSII). PSII is a light-driven water:plastoquinone oxidoreductase that uses light energy to abstract electrons from H(2)O, generating O(2) and a proton gradient subsequently used for ATP formation. It consists of a core antenna complex that captures photons, and an electron transfer chain that converts photonic excitation into a charge separation. This is Photosystem II reaction center protein K from Synechocystis sp. (strain ATCC 27184 / PCC 6803 / Kazusa).